A 650-amino-acid polypeptide reads, in one-letter code: Pentatricopeptide repeat-containing protein At2g41080 (650 aa).

12 PPR repeats span residues 43-77 (NTSL…GFSS), 78-112 (DKFI…NYMS), 114-139 (NILI…MPDR), 140-174 (KLTT…GFSP), 175-209 (DEYT…GLEL), 210-240 (DLVV…MPVR), 241-275 (NLVA…GCRP), 276-310 (NKIT…GASS), 311-341 (VVAV…REDE), 342-372 (DEVM…MAEQ), 378-413 (NEVA…GFKP), and 414-444 (GLKH…MPIK). Residues 449-524 (IWKTLLSACN…EAGISWFEHK (76 aa)) are type E motif. The interval 525–555 (GEVHQFKMGDRSQSKSKEIYSYLKELTLEMK) is type E(+) motif. The interval 556-650 (LKGYKPDTAS…NGKCSCGDYW (95 aa)) is type DYW motif.

This sequence belongs to the PPR family. PCMP-H subfamily.

This chain is Pentatricopeptide repeat-containing protein At2g41080 (PCMP-H29), found in Arabidopsis thaliana (Mouse-ear cress).